Here is an 846-residue protein sequence, read N- to C-terminus: Protein kintoun (846 aa).

Disordered stretches follow at residues 1 to 21 (MSTAAGSRKKHSKLHNEERAD), 377 to 412 (DSGVELHSNSESPVEDDADGYMPETPELETAAPPDP), 581 to 657 (HTSI…DSTI), and 743 to 846 (HDSS…DDEI). The residue at position 378 (S378) is a Phosphoserine. The span at 399-408 (PETPELETAA) shows a compositional bias: low complexity. Composition is skewed to basic residues over residues 596–612 (LHKKPSKKQRKRNKKQR) and 750–766 (QRKKNQKRRNCKLRAQQ). S770 carries the phosphoserine modification. A compositionally biased stretch (basic and acidic residues) spans 821 to 832 (TRQDHADADAKN).

This sequence belongs to the PIH1 family. Kintoun subfamily. Interacts with Pp1alpha-96A, Pp1-87B, Pp1-13C and flw.

It is found in the cytoplasm. Its function is as follows. Required for cytoplasmic pre-assembly of axonemal dyneins, thereby playing a central role in motility in cilia and flagella. Involved in pre-assembly of dynein arm complexes in the cytoplasm before intraflagellar transport loads them for the ciliary compartment. This is Protein kintoun from Drosophila pseudoobscura pseudoobscura (Fruit fly).